Here is a 71-residue protein sequence, read N- to C-terminus: Large ribosomal subunit protein uL29 (71 aa).

This sequence belongs to the universal ribosomal protein uL29 family.

The protein is Large ribosomal subunit protein uL29 (rpl29) of Halobacterium salinarum (strain ATCC 700922 / JCM 11081 / NRC-1) (Halobacterium halobium).